Reading from the N-terminus, the 539-residue chain is Cytochrome c oxidase subunit 1 homolog (539 aa).

Helical transmembrane passes span 28 to 48 and 75 to 95; these read LFAA…LLLL and GVMA…VVAL. Histidine 117 serves as a coordination point for heme b. 11 consecutive transmembrane segments (helical) span residues 118–138, 154–174, 187–207, 214–234, 265–285, 298–318, 330–350, 368–388, 402–422, 443–463, and 498–518; these read TSAV…FYVV, FVFW…LLGI, VDLW…GTIL, ISVA…LHIV, GHNA…YYFI, LSII…PHHL, LGMV…INGL, MMVM…MMSI, IGHV…GAIY, HFWL…VAGI, and LGGL…TMTI. Residues histidine 266, histidine 316, and histidine 317 each coordinate Cu cation. Positions 404 and 406 each coordinate heme b.

Belongs to the heme-copper respiratory oxidase family. Cu(2+) is required as a cofactor. Requires heme b as cofactor.

The protein resides in the cell membrane. The enzyme catalyses 4 Fe(II)-[cytochrome c] + O2 + 8 H(+)(in) = 4 Fe(III)-[cytochrome c] + 2 H2O + 4 H(+)(out). It functions in the pathway energy metabolism; oxidative phosphorylation. In terms of biological role, cytochrome c oxidase is the component of the respiratory chain that catalyzes the reduction of oxygen to water. Subunits 1-3 form the functional core of the enzyme complex. Co I is the catalytic subunit of the enzyme. Electrons originating in cytochrome c or a quinol are transferred to the bimetallic center formed by a high-spin heme and copper B. This Agrobacterium tumefaciens (strain T37) protein is Cytochrome c oxidase subunit 1 homolog (fixN).